The primary structure comprises 364 residues: Putative agmatine deiminase (364 aa).

The Amidino-cysteine intermediate role is filled by Cys-355.

This sequence belongs to the agmatine deiminase family.

The enzyme catalyses agmatine + H2O = N-carbamoylputrescine + NH4(+). This chain is Putative agmatine deiminase, found in Mycoplasma mycoides subsp. mycoides SC (strain CCUG 32753 / NCTC 10114 / PG1).